The chain runs to 404 residues: SL1278 acyltransferase Chp1 (404 aa).

The Periplasmic segment spans residues 1–42 (MKCPGVSDCVATVRHDNVFAIAAGLRWSAAVPPLHKGDAVTK). Residues 43 to 63 (LLVGAIAGGMLACAAILGDGI) traverse the membrane as a helical segment. Residues 64 to 404 (ASADTALIVP…RGLLPKGKKH (341 aa)) are Cytoplasmic-facing. In terms of domain architecture, PE-PPE spans 104-325 (PTATRHVVSY…LRPIIDRAYQ (222 aa)).

This sequence belongs to the mycobacterial PPE family.

The protein localises to the cell inner membrane. It carries out the reaction 3 3'-(hydroxy)phthioceranyl-2'-palmitoyl(stearoyl)-2-O-sulfo-alpha,alpha-trehalose = 3,6,6'-tris-(hydroxy)phthioceranyl-2-palmitoyl(stearoyl)-2'-sulfo-alpha-alpha-trehalose + 2 2'-palmitoyl/stearoyl-2-O-sulfo-alpha,alpha-trehalose.. With respect to regulation, activity is potentiated by the SL-1 transporter MmpL8. Inhibited by the lipase inhibitor tetrahydrolipstatin (THL). Functionally, involved in the final steps of the cell wall sulfolipid-1 (SL-1) biosynthesis. Catalyzes two successive acylations of the precursor 2-palmitoyl-3-(C43)-phthioceranyl-alpha, alpha'-D-trehalose-2'-sulfate (SL1278) to yield the tetraacylated sulfolipid SL-1. In Mycobacterium tuberculosis (strain ATCC 25618 / H37Rv), this protein is SL1278 acyltransferase Chp1.